The sequence spans 198 residues: Nucleoid occlusion factor SlmA (198 aa).

The HTH tetR-type domain maps to 10–70 (NRREEILQSL…SLIEFIEDSL (61 aa)). The segment at residues 33-52 (TTAKLAASVGVSEAALYRHF) is a DNA-binding region (H-T-H motif). The stretch at 117–145 (EQDKLQGRINQLFERIEAQLRQVLREKKM) forms a coiled coil.

It belongs to the nucleoid occlusion factor SlmA family. Homodimer. Interacts with FtsZ.

It localises to the cytoplasm. The protein localises to the nucleoid. Required for nucleoid occlusion (NO) phenomenon, which prevents Z-ring formation and cell division over the nucleoid. Acts as a DNA-associated cell division inhibitor that binds simultaneously chromosomal DNA and FtsZ, and disrupts the assembly of FtsZ polymers. SlmA-DNA-binding sequences (SBS) are dispersed on non-Ter regions of the chromosome, preventing FtsZ polymerization at these regions. The sequence is that of Nucleoid occlusion factor SlmA from Enterobacter sp. (strain 638).